A 138-amino-acid polypeptide reads, in one-letter code: CLAVATA3/ESR (CLE)-related protein 2 (138 aa).

Positions 1–22 (MPNIFKILLIVLLAVVSFRLSA) are cleaved as a signal peptide. The interval 23–90 (STGDKKTAND…VPSHVTNRSM (68 aa)) is required for secretion from the host cytoplasm to the host apoplasm. N-linked (GlcNAc...) asparagine glycans are attached at residues asparagine 37, asparagine 87, and asparagine 123. Disordered stretches follow at residues 66–97 (AIGR…PPPV) and 116–138 (LAEK…PHHH). The short motif at 127 to 138 (RLSPSGPDPHHH) is the CLE element.

This sequence belongs to the CLV3/ESR signal peptide family. As to expression, highly expressed exclusively within the dorsal esophageal gland cell during syncytium formation in host plants (at protein level).

The protein localises to the secreted. It localises to the host cytoplasm. Its subcellular location is the host extracellular space. It is found in the extracellular space. The protein resides in the apoplast. Mimics host plant CLE extracellular signal peptides that regulate cell fate. May play a role in the differentiation or division of feeding cells (syncytia) induced in plant roots during infection. This is CLAVATA3/ESR (CLE)-related protein 2 (CLE2) from Heterodera glycines (Soybean cyst nematode worm).